We begin with the raw amino-acid sequence, 279 residues long: Elongation factor Ts (279 aa).

Positions 80–83 (TDFV) are involved in Mg(2+) ion dislocation from EF-Tu.

The protein belongs to the EF-Ts family.

The protein resides in the cytoplasm. In terms of biological role, associates with the EF-Tu.GDP complex and induces the exchange of GDP to GTP. It remains bound to the aminoacyl-tRNA.EF-Tu.GTP complex up to the GTP hydrolysis stage on the ribosome. This Borrelia garinii subsp. bavariensis (strain ATCC BAA-2496 / DSM 23469 / PBi) (Borreliella bavariensis) protein is Elongation factor Ts.